We begin with the raw amino-acid sequence, 335 residues long: Interleukin-12 subunit beta (335 aa).

The N-terminal stretch at 1 to 22 (MCPQKLTISWFAIVLLVSPLMA) is a signal peptide. The Ig-like C2-type domain maps to 23-106 (MWELEKDVYV…LSHSHLLLHK (84 aa)). N47 is a glycosylation site (N-linked (GlcNAc...) asparagine). The cysteines at positions 50 and 90 are disulfide-linked. Residues N122, N132, and N220 are each glycosylated (N-linked (GlcNAc...) asparagine). The Fibronectin type-III domain maps to 233-324 (PDPPKNLQMK…QDRYYNSSCS (92 aa)).

It belongs to the IL-12B family. In terms of assembly, heterodimer with IL12A; disulfide-linked. The heterodimer is known as interleukin IL-12. Heterodimer with IL23A; disulfide-linked. The heterodimer is known as interleukin IL-23. Also secreted as a monomer. Interacts with NBR1; this interaction promotes IL-12 secretion.

The protein resides in the secreted. Functionally, cytokine that can act as a growth factor for activated T and NK cells, enhance the lytic activity of NK/lymphokine-activated killer cells, and stimulate the production of IFN-gamma by resting PBMC. Its function is as follows. Associates with IL23A to form the IL-23 interleukin, a heterodimeric cytokine which functions in innate and adaptive immunity. IL-23 may constitute with IL-17 an acute response to infection in peripheral tissues. IL-23 binds to a heterodimeric receptor complex composed of IL12RB1 and IL23R, activates the Jak-Stat signaling cascade, stimulates memory rather than naive T-cells and promotes production of pro-inflammatory cytokines. IL-23 induces autoimmune inflammation and thus may be responsible for autoimmune inflammatory diseases and may be important for tumorigenesis. This chain is Interleukin-12 subunit beta (Il12b), found in Mus musculus (Mouse).